The primary structure comprises 208 residues: uncharacterized protein (208 aa).

This is an uncharacterized protein from Legionella pneumophila subsp. pneumophila (strain Philadelphia 1 / ATCC 33152 / DSM 7513).